The chain runs to 500 residues: FAD-linked oxidoreductase chyH (500 aa).

A signal peptide spans 1–20 (MRLQAVTAVAAWAVASACQS). The region spanning 65-235 (LEVPTVNIVI…TSVTSKTYDI (171 aa)) is the FAD-binding PCMH-type domain. 4 N-linked (GlcNAc...) asparagine glycosylation sites follow: Asn-199, Asn-266, Asn-275, and Asn-383.

The protein belongs to the oxygen-dependent FAD-linked oxidoreductase family. FAD serves as cofactor.

It functions in the pathway pigment biosynthesis. FAD-linked oxidoreductase; part of the gene cluster that mediates the biosynthesis of the yellow pigment chrysogine. the NRPS chyA mediates the condensation of anthranilic acid and alanine into the intermediate 2-(2-aminopropanamido)benzoic acid. The remainder of the pathway is highly branched yielding at least 13 chrysogine-related compounds. The malonyl transferase chyE converts 2-(2-aminopropanamido)benzoic acid and 2-(2-aminopropanamido)benzamidine into 2-(2-(2-carboxyacetamido)propanamido)benzoic acid and 3-((1-((2-carbamoylphenyl)amino)-1-oxopropan-2-yl)amino)-3-oxopropanoic acid, respectively. ChyD is an amidase, being responsible for the amidation of the carboxylic acid moiety of 2-(2-aminopropanamido)benzoic acid, 2-(2-(2-carboxyacetamido)propanamido)benzoic acid and 2-(2-((4-amino-1-carboxy-4-oxobutyl)amino)propanamido)benzoic acid. ChyC is involved in the same reactions as ChyD, but plays a more minor role in the amidation reactions compared to chyD. The oxidoreductases chyH and chyM are involved in oxidation reactions that form N-pyruvoylanthranilamide from 2-(2-aminopropanamido)benzamidine and (1-((2-carbamoylphenyl)amino)-1-oxopropan-2-yl)glutamine, respectively. N-pyruvoylanthranilamide is further converted via two further branches in the pathway, yielding chrysogine and additional chrysogine-related coumpounds. Chrysogine is likely formed by a spontaneous ring closure from N-pyruvoylanthranilamide. The polypeptide is FAD-linked oxidoreductase chyH (Penicillium rubens (strain ATCC 28089 / DSM 1075 / NRRL 1951 / Wisconsin 54-1255) (Penicillium chrysogenum)).